Consider the following 489-residue polypeptide: Betaine aldehyde dehydrogenase (489 aa).

Asn93 contributes to the K(+) binding site. 150–152 (GAW) is a binding site for NAD(+). The active-site Charge relay system is the Lys162. Residue 176 to 179 (KPSE) participates in NAD(+) binding. Val180 is a K(+) binding site. 229-232 (EVGT) lines the NAD(+) pocket. Leu245 contacts K(+). Glu251 functions as the Proton acceptor in the catalytic mechanism. NAD(+)-binding residues include Gly253, Cys285, and Glu386. Residue Cys285 is the Nucleophile of the active site. Cys285 carries the cysteine sulfenic acid (-SOH) modification. K(+) is bound by residues Lys456 and Gly459. Glu463 acts as the Charge relay system in catalysis.

This sequence belongs to the aldehyde dehydrogenase family. In terms of assembly, dimer of dimers. The cofactor is K(+).

It catalyses the reaction betaine aldehyde + NAD(+) + H2O = glycine betaine + NADH + 2 H(+). It participates in amine and polyamine biosynthesis; betaine biosynthesis via choline pathway; betaine from betaine aldehyde: step 1/1. Functionally, involved in the biosynthesis of the osmoprotectant glycine betaine. Catalyzes the irreversible oxidation of betaine aldehyde to the corresponding acid. This is Betaine aldehyde dehydrogenase from Chromohalobacter salexigens (strain ATCC BAA-138 / DSM 3043 / CIP 106854 / NCIMB 13768 / 1H11).